Reading from the N-terminus, the 416-residue chain is Argininosuccinate synthase (416 aa).

ATP contacts are provided by residues 11-19 (AYSGGLDTS) and A37. L-citrulline is bound at residue Y88. Phosphotyrosine occurs at positions 88 and 114. Residue 116–124 (AHGATGKGN) participates in ATP binding. L-aspartate-binding residues include T120, N124, and D125. N124 lines the L-citrulline pocket. Residues R128, S181, S190, E271, and Y283 each contribute to the L-citrulline site. S181 is subject to Phosphoserine.

The protein belongs to the argininosuccinate synthase family. Homotetramer.

It is found in the cytoplasm. Its subcellular location is the cytosol. The enzyme catalyses L-citrulline + L-aspartate + ATP = 2-(N(omega)-L-arginino)succinate + AMP + diphosphate + H(+). The protein operates within amino-acid biosynthesis; L-arginine biosynthesis; L-arginine from L-ornithine and carbamoyl phosphate: step 2/3. Its pathway is nitrogen metabolism; urea cycle; (N(omega)-L-arginino)succinate from L-aspartate and L-citrulline: step 1/1. Functionally, one of the enzymes of the urea cycle, the metabolic pathway transforming neurotoxic amonia produced by protein catabolism into inocuous urea in the liver of ureotelic animals. Catalyzes the formation of arginosuccinate from aspartate, citrulline and ATP and together with ASL it is responsible for the biosynthesis of arginine in most body tissues. The chain is Argininosuccinate synthase from Gallus gallus (Chicken).